Reading from the N-terminus, the 82-residue chain is UPF0180 protein BH2667 (82 aa).

Belongs to the UPF0180 family.

This is UPF0180 protein BH2667 from Halalkalibacterium halodurans (strain ATCC BAA-125 / DSM 18197 / FERM 7344 / JCM 9153 / C-125) (Bacillus halodurans).